Here is a 154-residue protein sequence, read N- to C-terminus: MKCPFCGAEDTAVADTRLNDEADVVRRRRKCNACDKRFTTYERAEIQLPQVVKKNGLRTEFSRAKLRASLELALRKRPVSIESVDAAVADIEERLLSAGEREVTTQQLGELVMRELKKLDKVAYIRFASVYRNFEDVDAFSRAIREVSPAAKKK.

A zinc finger lies at 3–34; sequence CPFCGAEDTAVADTRLNDEADVVRRRRKCNAC. The ATP-cone domain occupies 49 to 139; that stretch reads PQVVKKNGLR…VYRNFEDVDA (91 aa).

It belongs to the NrdR family. Zn(2+) serves as cofactor.

Its function is as follows. Negatively regulates transcription of bacterial ribonucleotide reductase nrd genes and operons by binding to NrdR-boxes. This is Transcriptional repressor NrdR from Dechloromonas aromatica (strain RCB).